The primary structure comprises 244 residues: Phosphoadenosine 5'-phosphosulfate reductase (244 aa).

Cys239 acts as the Nucleophile; cysteine thiosulfonate intermediate in catalysis.

This sequence belongs to the PAPS reductase family. CysH subfamily.

The protein resides in the cytoplasm. It carries out the reaction [thioredoxin]-disulfide + sulfite + adenosine 3',5'-bisphosphate + 2 H(+) = [thioredoxin]-dithiol + 3'-phosphoadenylyl sulfate. The protein operates within sulfur metabolism; hydrogen sulfide biosynthesis; sulfite from sulfate: step 3/3. Catalyzes the formation of sulfite from phosphoadenosine 5'-phosphosulfate (PAPS) using thioredoxin as an electron donor. This is Phosphoadenosine 5'-phosphosulfate reductase from Salmonella paratyphi A (strain AKU_12601).